A 621-amino-acid polypeptide reads, in one-letter code: Chaperone protein HtpG (621 aa).

Residues 1 to 341 (MSNQEYTFQT…SEDLPLNVSR (341 aa)) form an a; substrate-binding region. Residues 342 to 547 (EILQQNKILA…GDEQNAMMAN (206 aa)) form a b region. The segment at 548–621 (LMRQMGQNMP…RLNSVLLKAL (74 aa)) is c.

Belongs to the heat shock protein 90 family. As to quaternary structure, homodimer.

The protein localises to the cytoplasm. Functionally, molecular chaperone. Has ATPase activity. The chain is Chaperone protein HtpG from Helicobacter acinonychis (strain Sheeba).